A 150-amino-acid polypeptide reads, in one-letter code: Transcription antitermination protein NusB (150 aa).

This sequence belongs to the NusB family.

Its function is as follows. Involved in transcription antitermination. Required for transcription of ribosomal RNA (rRNA) genes. Binds specifically to the boxA antiterminator sequence of the ribosomal RNA (rrn) operons. The polypeptide is Transcription antitermination protein NusB (Streptococcus pyogenes serotype M1).